The following is a 342-amino-acid chain: Probable long-chain-alcohol O-fatty-acyltransferase 3 (342 aa).

Transmembrane regions (helical) follow at residues 9–29, 36–56, 58–78, 115–135, 153–173, 227–247, 255–275, and 297–317; these read IKLW…STGI, LLSV…FSYV, FSGC…ILFS, IPIW…QMYE, IFLE…ITLG, MFLG…MLFF, TGEV…EVAV, and VGFV…SGII.

The protein belongs to the wax synthase family.

It localises to the membrane. It catalyses the reaction a long chain fatty alcohol + a fatty acyl-CoA = a wax ester + CoA. In terms of biological role, catalyzes the final step in the synthesis of long-chain linear esters (waxes). This chain is Probable long-chain-alcohol O-fatty-acyltransferase 3 (AT3), found in Arabidopsis thaliana (Mouse-ear cress).